A 176-amino-acid chain; its full sequence is Large ribosomal subunit protein uL10 (176 aa).

The protein belongs to the universal ribosomal protein uL10 family. As to quaternary structure, part of the ribosomal stalk of the 50S ribosomal subunit. The N-terminus interacts with L11 and the large rRNA to form the base of the stalk. The C-terminus forms an elongated spine to which L12 dimers bind in a sequential fashion forming a multimeric L10(L12)X complex.

Its function is as follows. Forms part of the ribosomal stalk, playing a central role in the interaction of the ribosome with GTP-bound translation factors. The polypeptide is Large ribosomal subunit protein uL10 (Marinobacter nauticus (strain ATCC 700491 / DSM 11845 / VT8) (Marinobacter aquaeolei)).